A 133-amino-acid polypeptide reads, in one-letter code: Crossover junction endodeoxyribonuclease Hjc (133 aa).

Glu-12 contributes to the Mg(2+) binding site. The active site involves Ser-32. Mg(2+) contacts are provided by Asp-36 and Glu-49.

The protein belongs to the Holliday junction resolvase Hjc family. In terms of assembly, homodimer. Mg(2+) serves as cofactor.

It catalyses the reaction Endonucleolytic cleavage at a junction such as a reciprocal single-stranded crossover between two homologous DNA duplexes (Holliday junction).. Functionally, a structure-specific endonuclease that resolves Holliday junction (HJ) intermediates during genetic recombination. Cleaves 4-way DNA junctions introducing paired nicks in opposing strands, leaving a 5'-terminal phosphate and a 3'-terminal hydroxyl group that are subsequently ligated to produce recombinant products. The chain is Crossover junction endodeoxyribonuclease Hjc from Methanocaldococcus jannaschii (strain ATCC 43067 / DSM 2661 / JAL-1 / JCM 10045 / NBRC 100440) (Methanococcus jannaschii).